A 557-amino-acid chain; its full sequence is MTSSSRGYQRVDSSGDGGSLLMEEEGDNPHEALLHRNNDDYASTYHHVGVEYDSYEELERHEMDDRVTEIPEGFHRRQRRNLIYGDDVATDEELRVLRREALFGEEVTRAGLGRAEYYEDSHLIHSCDKSGHEDIDDESDDESKDEDEEEEETGIRKFAKLVLPHVALVLLTCTYTVIGALIFYSVEQPHEQMMKEQQLKLIYTRQNEFVDDLIRLAAGNETKRYEWESLAERHMHNMSDQLFVAFEKYFLTSNEVKKNAATETWTFSSSIFFAVTVVTTIGYGNPVPVTNIGRIWCILFSLLGIPLTLVTIADLGKFLSEHLVWLYGNYLKLKYLILSRHRKERREHVCEHCHSHGMGHDMNIEEKRIPAFLVLAILIVYTAFGGVLMSKLEPWSFFTSFYWSFITMTTVGFGDLMPRRDGYMYIILLYIILGLAITTMCIDLVGVQYIRKIHYFGRKIQDARSALAVVGGKVVLVSELYANLMQKRARNMSREAFIVENLYVSKHIIPFIPTDIRCIRYIDQTADAATISTSSSAIDMQSCRFCHSRYSLNRAFK.

Disordered stretches follow at residues 1-34 (MTSSSRGYQRVDSSGDGGSLLMEEEGDNPHEALL) and 128-151 (DKSGHEDIDDESDDESKDEDEEEE). At 1–165 (MTSSSRGYQR…RKFAKLVLPH (165 aa)) the chain is on the cytoplasmic side. Over residues 134–151 (DIDDESDDESKDEDEEEE) the composition is skewed to acidic residues. A helical transmembrane segment spans residues 166–186 (VALVLLTCTYTVIGALIFYSV). 2 N-linked (GlcNAc...) asparagine glycosylation sites follow: Asn220 and Asn237. The segment at residues 270-290 (SIFFAVTVVTTIGYGNPVPVT) is an intramembrane region (pore-forming). A helical transmembrane segment spans residues 295–315 (IWCILFSLLGIPLTLVTIADL). The Cytoplasmic segment spans residues 316–368 (GKFLSEHLVWLYGNYLKLKYLILSRHRKERREHVCEHCHSHGMGHDMNIEEKR). Residues 369 to 389 (IPAFLVLAILIVYTAFGGVLM) traverse the membrane as a helical segment. The pore-forming intramembrane region spans 397–417 (FFTSFYWSFITMTTVGFGDLM). A helical membrane pass occupies residues 426–446 (IILLYIILGLAITTMCIDLVG). Over 447–557 (VQYIRKIHYF…SRYSLNRAFK (111 aa)) the chain is Cytoplasmic.

This sequence belongs to the two pore domain potassium channel (TC 1.A.1.8) family.

It is found in the membrane. This is TWiK family of potassium channels protein 7 (twk-7) from Caenorhabditis elegans.